A 509-amino-acid chain; its full sequence is ATP synthase subunit alpha (509 aa).

Position 169–176 (169–176 (GDRQTGKT)) interacts with ATP.

The protein belongs to the ATPase alpha/beta chains family. As to quaternary structure, F-type ATPases have 2 components, CF(1) - the catalytic core - and CF(0) - the membrane proton channel. CF(1) has five subunits: alpha(3), beta(3), gamma(1), delta(1), epsilon(1). CF(0) has three main subunits: a(1), b(2) and c(9-12). The alpha and beta chains form an alternating ring which encloses part of the gamma chain. CF(1) is attached to CF(0) by a central stalk formed by the gamma and epsilon chains, while a peripheral stalk is formed by the delta and b chains.

It is found in the cell inner membrane. It catalyses the reaction ATP + H2O + 4 H(+)(in) = ADP + phosphate + 5 H(+)(out). In terms of biological role, produces ATP from ADP in the presence of a proton gradient across the membrane. The alpha chain is a regulatory subunit. The sequence is that of ATP synthase subunit alpha from Methylobacterium nodulans (strain LMG 21967 / CNCM I-2342 / ORS 2060).